Here is a 113-residue protein sequence, read N- to C-terminus: MTKELKVQSSPQALKAGHLPAVKAGGMRVSKKQGNDENSAPEKNAKKTLQEKPSSVLNMTKMQAMNILAGELEKLSHDFPGEAAQIAHQKPRPTVEKIIMPKRLYLIQQPRRC.

The disordered stretch occupies residues 1-53; sequence MTKELKVQSSPQALKAGHLPAVKAGGMRVSKKQGNDENSAPEKNAKKTLQEKP.

This sequence belongs to the DAP-DAPL1 family. Associates with ribosomes; preventing translation. Interacts with eiF5a (eif5a and eif5a2); preventing translation.

Its function is as follows. Ribosome-binding protein that promotes ribosome hibernation, a process during which ribosomes are stabilized in an inactive state and preserved from proteasomal degradation. Acts via its association with eiF5a (eif5a and eif5a2) at the polypeptide exit tunnel of the ribosome, preventing mRNA translation. Plays a key role in ribosome hibernation in the mature egg by preventing mRNA translation, leading to ribosome inactivation. Ribosomes, which are produced in large quantities during oogenesis, are stored and translationally repressed in the egg and early embryo. The protein is Death-associated protein-like 1.S (dapl1.S) of Xenopus laevis (African clawed frog).